Reading from the N-terminus, the 431-residue chain is Glutamate-1-semialdehyde 2,1-aminomutase (431 aa).

An N6-(pyridoxal phosphate)lysine modification is found at lysine 269.

This sequence belongs to the class-III pyridoxal-phosphate-dependent aminotransferase family. HemL subfamily. In terms of assembly, homodimer. It depends on pyridoxal 5'-phosphate as a cofactor.

The protein resides in the cytoplasm. It catalyses the reaction (S)-4-amino-5-oxopentanoate = 5-aminolevulinate. It participates in porphyrin-containing compound metabolism; protoporphyrin-IX biosynthesis; 5-aminolevulinate from L-glutamyl-tRNA(Glu): step 2/2. The protein is Glutamate-1-semialdehyde 2,1-aminomutase of Francisella tularensis subsp. tularensis (strain SCHU S4 / Schu 4).